We begin with the raw amino-acid sequence, 252 residues long: Probable transcriptional regulatory protein Tmel_0985 (252 aa).

It belongs to the TACO1 family.

The protein localises to the cytoplasm. This is Probable transcriptional regulatory protein Tmel_0985 from Thermosipho melanesiensis (strain DSM 12029 / CIP 104789 / BI429).